Here is a 270-residue protein sequence, read N- to C-terminus: 3-methyl-2-oxobutanoate hydroxymethyltransferase (270 aa).

The Mg(2+) site is built by aspartate 41 and aspartate 80. Residues 41-42 (DS), aspartate 80, and lysine 109 contribute to the 3-methyl-2-oxobutanoate site. A Mg(2+)-binding site is contributed by glutamate 111. Catalysis depends on glutamate 178, which acts as the Proton acceptor.

It belongs to the PanB family. In terms of assembly, homodecamer; pentamer of dimers. It depends on Mg(2+) as a cofactor.

Its subcellular location is the cytoplasm. It catalyses the reaction 3-methyl-2-oxobutanoate + (6R)-5,10-methylene-5,6,7,8-tetrahydrofolate + H2O = 2-dehydropantoate + (6S)-5,6,7,8-tetrahydrofolate. It functions in the pathway cofactor biosynthesis; (R)-pantothenate biosynthesis; (R)-pantoate from 3-methyl-2-oxobutanoate: step 1/2. Its function is as follows. Catalyzes the reversible reaction in which hydroxymethyl group from 5,10-methylenetetrahydrofolate is transferred onto alpha-ketoisovalerate to form ketopantoate. This chain is 3-methyl-2-oxobutanoate hydroxymethyltransferase, found in Thermotoga maritima (strain ATCC 43589 / DSM 3109 / JCM 10099 / NBRC 100826 / MSB8).